Reading from the N-terminus, the 213-residue chain is RNA pyrophosphohydrolase (213 aa).

The region spanning 6–149 (GFRPNVGIVL…KRGVYEIALT (144 aa)) is the Nudix hydrolase domain. The Nudix box motif lies at 38–59 (GGIDRGETPEQAMIRELHEEVG). A disordered region spans residues 185–213 (NFELPPGGSFEPNPQTSYGLDASGKPHET).

It belongs to the Nudix hydrolase family. RppH subfamily. It depends on a divalent metal cation as a cofactor.

Functionally, accelerates the degradation of transcripts by removing pyrophosphate from the 5'-end of triphosphorylated RNA, leading to a more labile monophosphorylated state that can stimulate subsequent ribonuclease cleavage. This is RNA pyrophosphohydrolase from Albidiferax ferrireducens (strain ATCC BAA-621 / DSM 15236 / T118) (Rhodoferax ferrireducens).